The primary structure comprises 246 residues: uncharacterized protein (246 aa).

This is an uncharacterized protein from Thermotoga maritima (strain ATCC 43589 / DSM 3109 / JCM 10099 / NBRC 100826 / MSB8).